The sequence spans 923 residues: Progesterone receptor (923 aa).

The segment covering 1–11 (MTELQAKDPRT) has biased composition (basic and acidic residues). Residues 1–49 (MTELQAKDPRTLHTSGAAPSPTHVGSPLLARLDPDPFQGSQHSDASSVV) form a disordered region. Positions 1–164 (MTELQAKDPR…PATKGLLSPL (164 aa)) are AF3; mediates transcriptional activation (in isoform B). Positions 1–556 (MTELQAKDPR…YGFDSLPQKI (556 aa)) are modulating, Pro-Rich. A Glycyl lysine isopeptide (Lys-Gly) (interchain with G-Cter in SUMO) cross-link involves residue Lys-7. The residue at position 20 (Ser-20) is a Phosphoserine. A compositionally biased stretch (polar residues) spans 38–49 (QGSQHSDASSVV). Positions 56–60 (LDRLL) match the LXXL motif 1 motif. Residues 67 to 111 (AQELPDEKTQNQQSLSDVEGAFSGVEASRRRSRNPRAPEKDSRLL) form a disordered region. A Phosphoserine modification is found at Ser-82. Residues 115 to 119 (LDTLL) carry the LXXL motif 2 motif. Phosphoserine is present on residues Ser-130 and Ser-162. A disordered region spans residues 152-239 (RSVPATKGLL…EGSAGPLLKS (88 aa)). A mediates transcriptional transrepression (in isoform A) region spans residues 165 to 304 (MSRPESKAGD…LATTVVDFIH (140 aa)). Residues 184–188 (VLPKA) carry the Nuclear localization signal motif. Ser-190 and Ser-213 each carry phosphoserine. Residue Ser-293 is modified to Phosphoserine; by MAPK1. A disordered region spans residues 333–371 (AAQVPFAPPRGSPSAPSPPVPCGDFPDCTYPPEGDPKED). Residues 338 to 353 (FAPPRGSPSAPSPPVP) are compositionally biased toward pro residues. Residue Ser-344 is modified to Phosphoserine; by MAPK. Lys-387 is covalently cross-linked (Glycyl lysine isopeptide (Lys-Gly) (interchain with G-Cter in SUMO); alternate). Lys-387 is covalently cross-linked (Glycyl lysine isopeptide (Lys-Gly) (interchain with G-Cter in ubiquitin); alternate). Residue Ser-399 is modified to Phosphoserine; by CDK2. Positions 412 to 435 (TFPDFPLPPRPPRAPPSRPGEAAV) are disordered. The segment covering 416–429 (FPLPPRPPRAPPSR) has biased composition (pro residues). The segment at 450–536 (SALECILYKA…VYPPYLNYLR (87 aa)) is AF1; mediates transcriptional activation. Lys-521 is covalently cross-linked (Glycyl lysine isopeptide (Lys-Gly) (interchain with G-Cter in SUMO)). 2 NR C4-type zinc fingers span residues 557–577 (CLIC…CGSC) and 593–617 (CAGR…LRKC). The segment at residues 557 to 629 (CLICGDEASG…AGMVLGGRKF (73 aa)) is a DNA-binding region (nuclear receptor). At Ser-666 the chain carries Phosphoserine. The 235-residue stretch at 669–903 (QEIQLVPPLI…EFPEMMSEVI (235 aa)) folds into the NR LBD domain. The interval 677–923 (LINLLMSIEP…MVKPLLFHKK (247 aa)) is AF2; mediates transcriptional activation. A progesterone-binding site is contributed by Arg-756.

It belongs to the nuclear hormone receptor family. NR3 subfamily. As to quaternary structure, interacts with SMARD1 and UNC45A. Interacts with CUEDC2; the interaction promotes ubiquitination, decreases sumoylation, and represses transcriptional activity. Interacts with PIAS3; the interaction promotes sumoylation of PR in a hormone-dependent manner, inhibits DNA-binding, and alters nuclear export. Interacts with SP1; the interaction requires ligand-induced phosphorylation on Ser-344. Interacts with PRMT2. Isoform A interacts with NCOR2. Isoform B (but not isoform A) interacts with NCOA2 and NCOA1. Isoform B (but not isoform A) interacts with KLF9. Interacts with GTF2B. In terms of processing, phosphorylated on multiple serine sites. Several of these sites are hormone-dependent. Phosphorylation on Ser-293 is highly hormone-dependent and modulates ubiquitination and sumoylation on Lys-387. Phosphorylation on Ser-344 also requires induction by hormone. Basal phosphorylation on Ser-82, Ser-190 and Ser-399 is increased in response to progesterone and can be phosphorylated in vitro by the CDK2-A1 complex. Increased levels of phosphorylation on Ser-399 also in the presence of EGF, heregulin, IGF, PMA and FBS. Phosphorylation at this site by CDK2 is ligand-independent, and increases nuclear translocation and transcriptional activity. Phosphorylation at Ser-293, but not at Ser-190, is impaired during the G(2)/M phase of the cell cycle. Phosphorylation on Ser-344 by ERK1/2 MAPK is required for interaction with SP1. Post-translationally, sumoylation is hormone-dependent and represses transcriptional activity. Sumoylation on all three sites is enhanced by PIAS3. Desumoylated by SENP1. Sumoylation on Lys-387, the main site of sumoylation, is repressed by ubiquitination on the same site, and modulated by phosphorylation at Ser-293. Ubiquitination is hormone-dependent and represses sumoylation on the same site. Promoted by MAPK-mediated phosphorylation on Ser-293. Ubiquitinated by UBR5, leading to its degradation: UBR5 specifically recognizes and binds ligand-bound PGR when it is not associated with coactivators (NCOAs). In presence of NCOAs, the UBR5-degron is not accessible, preventing its ubiquitination and degradation. In terms of processing, palmitoylated by ZDHHC7 and ZDHHC21. Palmitoylation is required for plasma membrane targeting and for rapid intracellular signaling via ERK and AKT kinases and cAMP generation. As to expression, isoform A and isoform B are expressed in the pituitary.

It localises to the nucleus. The protein localises to the cytoplasm. The steroid hormones and their receptors are involved in the regulation of eukaryotic gene expression and affect cellular proliferation and differentiation in target tissues. Depending on the isoform, progesterone receptor functions as a transcriptional activator or repressor. Functionally, ligand-dependent transdominant repressor of steroid hormone receptor transcriptional activity including repression of its isoform B, MR and ER. Transrepressional activity may involve recruitment of corepressor NCOR2. In terms of biological role, transcriptional activator of several progesteron-dependent promoters in a variety of cell types. Involved in activation of SRC-dependent MAPK signaling on hormone stimulation. The protein is Progesterone receptor (Pgr) of Rattus norvegicus (Rat).